A 132-amino-acid chain; its full sequence is uncharacterized protein (132 aa).

Residues 45-115 form the BIG2 domain; that stretch reads VHMEKHKLKI…VVIVTTAEGK (71 aa).

The protein to B.anthracis BA1245.

This is an uncharacterized protein from Bacillus cereus (strain ATCC 14579 / DSM 31 / CCUG 7414 / JCM 2152 / NBRC 15305 / NCIMB 9373 / NCTC 2599 / NRRL B-3711).